A 341-amino-acid chain; its full sequence is UDP-N-acetyl-alpha-D-glucosaminouronate 4-epimerase (341 aa).

Residues phenylalanine 27, isoleucine 28, aspartate 47, alanine 50, threonine 51, glycine 52, aspartate 78, isoleucine 79, and glutamine 98 each contribute to the NAD(+) site. Serine 103 serves as a coordination point for UDP-N-acetyl-alpha-D-galactosamine. Threonine 117 is an NAD(+) binding site. 3 residues coordinate UDP-N-acetyl-alpha-D-galactosamine: serine 142, serine 143, and tyrosine 166. NAD(+) contacts are provided by tyrosine 166 and lysine 170. The Proton acceptor role is filled by tyrosine 166. Asparagine 195 is a binding site for UDP-N-acetyl-alpha-D-galactosamine. Valine 196 is an NAD(+) binding site. UDP-N-acetyl-alpha-D-galactosamine-binding residues include valine 210, tyrosine 225, asparagine 227, arginine 234, arginine 299, and aspartate 302.

It belongs to the NAD(P)-dependent epimerase/dehydratase family. Homodimer. NAD(+) is required as a cofactor.

It catalyses the reaction UDP-2-acetamido-2-deoxy-alpha-D-glucuronate = UDP-2-acetamido-2-deoxy-alpha-D-galacturonate. The catalysed reaction is UDP-N-acetyl-alpha-D-glucosamine = UDP-N-acetyl-alpha-D-galactosamine. Its pathway is bacterial outer membrane biogenesis; LPS O-antigen biosynthesis. Epimerase required for the biosynthesis of the B-band O antigen of serotype O6 lipopolysaccharide. Catalyzes the reversible epimerization of UDP-N-acetylglucosaminuronic acid (UDP-GlcNAcA) to UDP-N-acetylgalactosaminuronic acid (UDP-GalNAcA). Also catalyzes the reversible epimerization of UDP-N-acetylglucosamine (UDP-GlcNAc) to UDP-N-acetylgalactosamine (UDP-GalNAc). Has very low epimerase activity with UDP-glucose (UDP-Glc) and UDP-galactose (UDP-Gal). The sequence is that of UDP-N-acetyl-alpha-D-glucosaminouronate 4-epimerase from Pseudomonas aeruginosa.